A 235-amino-acid chain; its full sequence is Large ribosomal subunit protein uL1 (235 aa).

This sequence belongs to the universal ribosomal protein uL1 family. In terms of assembly, part of the 50S ribosomal subunit.

Its function is as follows. Binds directly to 23S rRNA. The L1 stalk is quite mobile in the ribosome, and is involved in E site tRNA release. In terms of biological role, protein L1 is also a translational repressor protein, it controls the translation of the L11 operon by binding to its mRNA. This is Large ribosomal subunit protein uL1 from Prochlorococcus marinus (strain MIT 9303).